We begin with the raw amino-acid sequence, 634 residues long: MEHQQNHTFSADTGKLLKLMIHSLYSNKEIFLRELVSNAADAADKLRFKALSDGSLFENDGDLRVRLSFDADLKTITISDNGIGMSRDEVIEHLGTIAKSGTSDFFEQLSGDQVKDSQLIGQFGVGFYSSFIVADKVTVNTRKAGEPASQGTCWISTGESDYTVADIEKAGRGTEITLHLRDDETEFLNDYKLRGIVSKYSDHISIPVEMFKEATEESEGSDGEKVPATEATWEAVNKATALWSCSKSELKDEEYKEFYKHIANDFEDPLTWSHNKVEGEQAYTSLLYIPKRAPYDLWNREKAHGLKLYVQRVFVMDDAEQFMPTYLRFVKGVLDSNDLPLNVSREILQDTRVTAKLRSGCTKRVLDLLTKLAKKDDDAYNLFWKEFGQVLKEGPAEDSSNKEKIGKLFRFSSTETDSTEQTVSLDAYISRMTEGQDKIYYITADSFNAAKNSPHLEVLREKGIEVLLLSDRIDEWLLSHLPEYDGKTFTSVTQGDLDLGKLDSEEKKKEQEKQETEFASFVERVKAVLGDKVKDVRLTHRLTSTPSCIVADNDDMSTQMAKLMAQMGQPVPESKPVFELNPEHVMIVKLADMADEDLFAQWSELLLEQAILSEKGSLDDPSEFVGRINKLLLA.

The segment at 1-345 (MEHQQNHTFS…SNDLPLNVSR (345 aa)) is a; substrate-binding. The interval 346–562 (EILQDTRVTA…NDDMSTQMAK (217 aa)) is b. Positions 563–634 (LMAQMGQPVP…VGRINKLLLA (72 aa)) are c.

It belongs to the heat shock protein 90 family. Homodimer.

It is found in the cytoplasm. In terms of biological role, molecular chaperone. Has ATPase activity. In Psychromonas ingrahamii (strain DSM 17664 / CCUG 51855 / 37), this protein is Chaperone protein HtpG.